Reading from the N-terminus, the 88-residue chain is Toxin RelE2 (88 aa).

The protein belongs to the RelE toxin family.

Toxic component of a type II toxin-antitoxin (TA) system. Its toxic effect is neutralized by coexpression with cognate antitoxin RelB2 but no other ParD or RelB antitoxin. This Caulobacter vibrioides (strain ATCC 19089 / CIP 103742 / CB 15) (Caulobacter crescentus) protein is Toxin RelE2 (relE2).